The primary structure comprises 264 residues: Thymidylate synthase (264 aa).

Arginine 21 is a binding site for dUMP. (6R)-5,10-methylene-5,6,7,8-tetrahydrofolate is bound at residue histidine 51. Residue arginine 126 to arginine 127 coordinates dUMP. Cysteine 146 serves as the catalytic Nucleophile. Residues arginine 166 to aspartate 169, asparagine 177, and histidine 207 to tyrosine 209 each bind dUMP. Aspartate 169 provides a ligand contact to (6R)-5,10-methylene-5,6,7,8-tetrahydrofolate. Alanine 263 contributes to the (6R)-5,10-methylene-5,6,7,8-tetrahydrofolate binding site.

It belongs to the thymidylate synthase family. Bacterial-type ThyA subfamily. Homodimer.

It localises to the cytoplasm. It carries out the reaction dUMP + (6R)-5,10-methylene-5,6,7,8-tetrahydrofolate = 7,8-dihydrofolate + dTMP. Its pathway is pyrimidine metabolism; dTTP biosynthesis. Functionally, catalyzes the reductive methylation of 2'-deoxyuridine-5'-monophosphate (dUMP) to 2'-deoxythymidine-5'-monophosphate (dTMP) while utilizing 5,10-methylenetetrahydrofolate (mTHF) as the methyl donor and reductant in the reaction, yielding dihydrofolate (DHF) as a by-product. This enzymatic reaction provides an intracellular de novo source of dTMP, an essential precursor for DNA biosynthesis. This chain is Thymidylate synthase, found in Azoarcus sp. (strain BH72).